We begin with the raw amino-acid sequence, 720 residues long: DNA ligase (720 aa).

NAD(+)-binding positions include 60–64, 109–110, and E140; these read DYDYD and SL. K142 functions as the N6-AMP-lysine intermediate in the catalytic mechanism. NAD(+)-binding residues include R163 and E201. Positions 220 to 239 are disordered; sequence GLPPFANPRNAAAGSIRQKD. Residues K320 and K344 each contribute to the NAD(+) site. Zn(2+)-binding residues include C438, C441, C456, and C461. One can recognise a BRCT domain in the interval 619–709; that stretch reads KVADVLKGKT…VDLEKIKKED (91 aa).

This sequence belongs to the NAD-dependent DNA ligase family. LigA subfamily. The cofactor is Mn(2+). Requires Mg(2+) as cofactor.

It catalyses the reaction NAD(+) + (deoxyribonucleotide)n-3'-hydroxyl + 5'-phospho-(deoxyribonucleotide)m = (deoxyribonucleotide)n+m + AMP + beta-nicotinamide D-nucleotide.. Functionally, DNA ligase that catalyzes the formation of phosphodiester linkages between 5'-phosphoryl and 3'-hydroxyl groups in double-stranded DNA using NAD as a coenzyme and as the energy source for the reaction. It is essential for DNA replication and repair of damaged DNA. This is DNA ligase from Aquifex aeolicus (strain VF5).